We begin with the raw amino-acid sequence, 914 residues long: Protein translocase subunit SecA (914 aa).

ATP-binding positions include Q87, G105–T109, and D508. Residues C898, C900, C909, and H910 each coordinate Zn(2+).

Belongs to the SecA family. As to quaternary structure, monomer and homodimer. Part of the essential Sec protein translocation apparatus which comprises SecA, SecYEG and auxiliary proteins SecDF-YajC and YidC. Zn(2+) is required as a cofactor.

The protein resides in the cell inner membrane. It localises to the cytoplasm. It carries out the reaction ATP + H2O + cellular proteinSide 1 = ADP + phosphate + cellular proteinSide 2.. Functionally, part of the Sec protein translocase complex. Interacts with the SecYEG preprotein conducting channel. Has a central role in coupling the hydrolysis of ATP to the transfer of proteins into and across the cell membrane, serving both as a receptor for the preprotein-SecB complex and as an ATP-driven molecular motor driving the stepwise translocation of polypeptide chains across the membrane. The protein is Protein translocase subunit SecA of Xylella fastidiosa (strain M23).